We begin with the raw amino-acid sequence, 103 residues long: Large ribosomal subunit protein eL14 (103 aa).

The protein belongs to the eukaryotic ribosomal protein eL14 family.

The sequence is that of Large ribosomal subunit protein eL14 from Pyrobaculum islandicum (strain DSM 4184 / JCM 9189 / GEO3).